We begin with the raw amino-acid sequence, 396 residues long: S-adenosylmethionine synthase 4 (396 aa).

Glu-13 serves as a coordination point for Mg(2+). His-19 is an ATP binding site. Glu-47 is a binding site for K(+). L-methionine-binding residues include Glu-60 and Gln-103. ATP-binding positions include 171-173 (DGK), 239-242 (SGRF), Asp-250, 256-257 (RK), Ala-273, Lys-277, and Lys-281. L-methionine is bound at residue Asp-250. Lys-281 contacts L-methionine.

This sequence belongs to the AdoMet synthase family. Homotetramer. The cofactor is Mn(2+). Mg(2+) is required as a cofactor. It depends on Co(2+) as a cofactor. Requires K(+) as cofactor. In terms of tissue distribution, expressed in roots, stems and leaves (at protein level).

It localises to the cytoplasm. The enzyme catalyses L-methionine + ATP + H2O = S-adenosyl-L-methionine + phosphate + diphosphate. It functions in the pathway amino-acid biosynthesis; S-adenosyl-L-methionine biosynthesis; S-adenosyl-L-methionine from L-methionine: step 1/1. Its function is as follows. Catalyzes the formation of S-adenosylmethionine from methionine and ATP. The reaction comprises two steps that are both catalyzed by the same enzyme: formation of S-adenosylmethionine (AdoMet) and triphosphate, and subsequent hydrolysis of the triphosphate. May be involved in the synthesis of betain in response to abiotic stress such as high salinity. This Atriplex nummularia (Old man saltbush) protein is S-adenosylmethionine synthase 4 (SAMS4).